The following is a 189-amino-acid chain: Hypoxanthine/guanine phosphoribosyltransferase (189 aa).

The protein belongs to the purine/pyrimidine phosphoribosyltransferase family. Archaeal HPRT subfamily. As to quaternary structure, homodimer.

It localises to the cytoplasm. It catalyses the reaction IMP + diphosphate = hypoxanthine + 5-phospho-alpha-D-ribose 1-diphosphate. It carries out the reaction GMP + diphosphate = guanine + 5-phospho-alpha-D-ribose 1-diphosphate. Its pathway is purine metabolism; IMP biosynthesis via salvage pathway; IMP from hypoxanthine: step 1/1. Functionally, catalyzes a salvage reaction resulting in the formation of IMP that is energically less costly than de novo synthesis. In Methanothrix soehngenii (strain ATCC 5969 / DSM 3671 / JCM 10134 / NBRC 103675 / OCM 69 / GP-6) (Methanosaeta concilii), this protein is Hypoxanthine/guanine phosphoribosyltransferase.